A 145-amino-acid chain; its full sequence is Catabolic 3-dehydroquinase (145 aa).

Tyrosine 24 serves as the catalytic Proton acceptor. Substrate contacts are provided by asparagine 77, histidine 83, and aspartate 90. Histidine 103 (proton donor) is an active-site residue. Residues 104–105 and arginine 114 each bind substrate; that span reads IT.

The protein belongs to the type-II 3-dehydroquinase family. Homododecamer. Adopts a ring-like structure, composed of an arrangement of two hexameric rings stacked on top of one another.

The catalysed reaction is 3-dehydroquinate = 3-dehydroshikimate + H2O. Its pathway is aromatic compound metabolism; 3,4-dihydroxybenzoate biosynthesis; 3,4-dihydroxybenzoate from 3-dehydroquinate: step 1/2. Its function is as follows. Is involved in the catabolism of quinate. Allows the utilization of quinate as carbon source via the beta-ketoadipate pathway. The sequence is that of Catabolic 3-dehydroquinase from Clavispora lusitaniae (strain ATCC 42720) (Yeast).